The chain runs to 233 residues: Small ribosomal subunit protein uS3 (233 aa).

The KH type-2 domain maps to 39–107 (VRQFLASELT…PSQINIAEVR (69 aa)).

The protein belongs to the universal ribosomal protein uS3 family. Part of the 30S ribosomal subunit. Forms a tight complex with proteins S10 and S14.

In terms of biological role, binds the lower part of the 30S subunit head. Binds mRNA in the 70S ribosome, positioning it for translation. The protein is Small ribosomal subunit protein uS3 of Baumannia cicadellinicola subsp. Homalodisca coagulata.